The following is a 351-amino-acid chain: Translation initiation factor eIF2B subunit beta (351 aa).

This sequence belongs to the eIF-2B alpha/beta/delta subunits family. Component of the translation initiation factor 2B (eIF2B) complex which is a heterodecamer of two sets of five different subunits: alpha, beta, gamma, delta and epsilon. Subunits alpha, beta and delta comprise a regulatory subcomplex and subunits epsilon and gamma comprise a catalytic subcomplex. Within the complex, the hexameric regulatory complex resides at the center, with the two heterodimeric catalytic subcomplexes bound on opposite sides.

It localises to the cytoplasm. Its subcellular location is the cytosol. With respect to regulation, activated by the chemical integrated stress response (ISR) inhibitor ISRIB which stimulates guanine nucleotide exchange factor activity for both phosphorylated and unphosphorylated eIF2. In terms of biological role, acts as a component of the translation initiation factor 2B (eIF2B) complex, which catalyzes the exchange of GDP for GTP on eukaryotic initiation factor 2 (eIF2) gamma subunit. Its guanine nucleotide exchange factor activity is repressed when bound to eIF2 complex phosphorylated on the alpha subunit, thereby limiting the amount of methionyl-initiator methionine tRNA available to the ribosome and consequently global translation is repressed. The polypeptide is Translation initiation factor eIF2B subunit beta (EIF2B2) (Homo sapiens (Human)).